Here is a 150-residue protein sequence, read N- to C-terminus: Large ribosomal subunit protein bL9 (150 aa).

The protein belongs to the bacterial ribosomal protein bL9 family.

In terms of biological role, binds to the 23S rRNA. This Streptococcus mutans serotype c (strain ATCC 700610 / UA159) protein is Large ribosomal subunit protein bL9.